We begin with the raw amino-acid sequence, 264 residues long: Nuclear egress protein 1 (264 aa).

Over residues 1 to 12 the composition is skewed to basic residues; the sequence is MTVHKNRFRRSR. Residues 1–22 form a disordered region; that stretch reads MTVHKNRFRRSRSLSVTHRIQK. A CCCH-type zinc finger spans residues 83 to 187; sequence CLEFSPYANE…HIVFQSRTLH (105 aa).

It belongs to the herpesviridae NEC1 protein family. Forms a heterohexameric complex with NEC2. Interacts with capsid vertex specific component 2/CVC2; this interaction directs the capsid to the host inner nuclear membrane to initiate budding. Phosphorylated at serine residues in the N-terminus. This phosphorylation regulates the localization within the inner nuclear membrane.

It localises to the host nucleus inner membrane. Its function is as follows. Plays an essential role in virion nuclear egress, the first step of virion release from infected cell. Within the host nucleus, NEC1 interacts with the newly formed capsid through the vertexes and directs it to the inner nuclear membrane by associating with NEC2. Induces the budding of the capsid at the inner nuclear membrane as well as its envelopment into the perinuclear space. There, the NEC1/NEC2 complex promotes the fusion of the enveloped capsid with the outer nuclear membrane and the subsequent release of the viral capsid into the cytoplasm where it will reach the secondary budding sites in the host Golgi or trans-Golgi network. The protein is Nuclear egress protein 1 of Human herpesvirus 6B (HHV-6 variant B).